The primary structure comprises 140 residues: 3-hydroxyacyl-[acyl-carrier-protein] dehydratase FabZ (140 aa).

Residue histidine 47 is part of the active site.

This sequence belongs to the thioester dehydratase family. FabZ subfamily.

The protein localises to the cytoplasm. It carries out the reaction a (3R)-hydroxyacyl-[ACP] = a (2E)-enoyl-[ACP] + H2O. Its function is as follows. Involved in unsaturated fatty acids biosynthesis. Catalyzes the dehydration of short chain beta-hydroxyacyl-ACPs and long chain saturated and unsaturated beta-hydroxyacyl-ACPs. This chain is 3-hydroxyacyl-[acyl-carrier-protein] dehydratase FabZ, found in Streptococcus pyogenes serotype M49 (strain NZ131).